The primary structure comprises 148 residues: UPF0260 protein KPK_1978 (148 aa).

Belongs to the UPF0260 family.

The protein is UPF0260 protein KPK_1978 of Klebsiella pneumoniae (strain 342).